The sequence spans 207 residues: Large ribosomal subunit protein uL4 (207 aa).

Belongs to the universal ribosomal protein uL4 family. In terms of assembly, part of the 50S ribosomal subunit.

In terms of biological role, one of the primary rRNA binding proteins, this protein initially binds near the 5'-end of the 23S rRNA. It is important during the early stages of 50S assembly. It makes multiple contacts with different domains of the 23S rRNA in the assembled 50S subunit and ribosome. Functionally, forms part of the polypeptide exit tunnel. The polypeptide is Large ribosomal subunit protein uL4 (Erythrobacter litoralis (strain HTCC2594)).